The following is a 29-amino-acid chain: Cyclotide mela-3 (29 aa).

The cyclopeptide (Gly-Asp) cross-link spans G1–D29. Disulfide bonds link C5-C19, C9-C21, and C14-C26.

Post-translationally, this is a cyclic peptide. In terms of processing, contains 3 disulfide bonds.

Its function is as follows. Probably participates in a plant defense mechanism (Potential). Binds to and induces leakage in phospholipd membranes, particularly ones containing 1-palmitoyl-2-oleophosphatidylethanolamine (POPE). In vitro, displays cytotoxicity against cultured cells. Not active against Gram-negative bacterium E.coli ATCC 25922 or Gram-positive bacterium S.aureus ATCC 25923 up to a concentration of 64 uM. This is Cyclotide mela-3 from Melicytus latifolius (Norfolk Island mahoe).